The following is a 441-amino-acid chain: N-acetylmuramyl-L-alanine amidase (441 aa).

Residues 1-25 (MKTKTLFIFSAILTLSIFAPNETFA) form the signal peptide.

Belongs to the peptidase S12 family.

The catalysed reaction is Hydrolyzes the link between N-acetylmuramoyl residues and L-amino acid residues in certain cell-wall glycopeptides.. It participates in cell wall biogenesis; peptidoglycan recycling. Functionally, involved in muropeptide recycling. Hydrolyzes the amide bond between N-acetylmuramic acid (MurNAc) and the L-alanine residue of the stem peptide. Cannot hydrolyze muropeptides containing N-acetylglucosamine (GlcNAc) at the non-reducing end. The polypeptide is N-acetylmuramyl-L-alanine amidase (Bacillus subtilis (strain 168)).